The chain runs to 1906 residues: Serine protease/ABC transporter B family protein tagB (1906 aa).

The first 31 residues, 1-31 (MKFQFSSPSKIFLFSSVILILIFIGIKFELL), serve as a signal peptide directing secretion. A disordered region spans residues 96-134 (INNNNNNNNKLNNNNNNNNNNNNNNNNNNNNNNNNNNNN). A Peptidase S8 domain is found at 356 to 763 (PTVIFGTKDK…ASSTNPSNAI (408 aa)). Active-site charge relay system residues include aspartate 387 and histidine 432. N-linked (GlcNAc...) asparagine glycans are attached at residues asparagine 594, asparagine 621, and asparagine 672. Serine 695 functions as the Charge relay system in the catalytic mechanism. N-linked (GlcNAc...) asparagine glycans are attached at residues asparagine 747 and asparagine 823. 3 helical membrane-spanning segments follow: residues 1011–1031 (YIII…LMWI), 1076–1096 (FIIE…ASIL), and 1121–1141 (FIII…GSWI). Positions 1080–1363 (LTIATACSLV…LFGVYVSYIQ (284 aa)) constitute an ABC transmembrane type-1 domain. N-linked (GlcNAc...) asparagine glycosylation occurs at asparagine 1172. 3 consecutive transmembrane segments (helical) span residues 1210-1230 (LVFI…AVPI), 1309-1329 (WLLI…LVIQ), and 1332-1352 (FTVG…DASS). The segment at 1385 to 1455 (LEEEEADRLA…NNNNNIGNLD (71 aa)) is disordered. Residues 1396–1405 (LSGGGGGGGD) are compositionally biased toward gly residues. Residues 1407–1420 (GDDKKDKQNIENGK) are compositionally biased toward basic and acidic residues. The ABC transporter domain occupies 1518–1756 (IEFKNVSFRY…KGKYYRMFSE (239 aa)). An N-linked (GlcNAc...) asparagine glycan is attached at asparagine 1522. 1553 to 1560 (GPSGSGKS) provides a ligand contact to ATP. An N-linked (GlcNAc...) asparagine glycan is attached at asparagine 1658. Positions 1757 to 1906 (DKDDTPLQNN…QMDEENDEER (150 aa)) are disordered. 2 stretches are compositionally biased toward low complexity: residues 1765–1779 (NNNN…NNNN) and 1814–1871 (EQQE…DYDQ). Over residues 1872–1886 (VPPPPPLPSESPSPP) the composition is skewed to pro residues.

In the C-terminal section; belongs to the ABC transporter superfamily. ABCB family. Multidrug resistance exporter (TC 3.A.1.201) subfamily. The protein in the N-terminal section; belongs to the peptidase S8 family.

Its subcellular location is the membrane. In terms of biological role, intercellular communication via tagB may mediate integration of cellular differentiation with morphogenesis. The chain is Serine protease/ABC transporter B family protein tagB (tagB) from Dictyostelium discoideum (Social amoeba).